The sequence spans 315 residues: DNA-directed RNA polymerase subunit alpha (315 aa).

The interval 1-228 (MAQFQIECVE…DLFNPLKDIS (228 aa)) is alpha N-terminal domain (alpha-NTD). Residues 243 to 315 (TAQIPIEELQ…LPQERSSKHN (73 aa)) are alpha C-terminal domain (alpha-CTD).

This sequence belongs to the RNA polymerase alpha chain family. In terms of assembly, homodimer. In cyanobacteria the RNAP catalytic core is composed of 2 alpha, 1 beta, 1 beta', 1 gamma and 1 omega subunit. When a sigma factor is associated with the core the holoenzyme is formed, which can initiate transcription.

It catalyses the reaction RNA(n) + a ribonucleoside 5'-triphosphate = RNA(n+1) + diphosphate. Its function is as follows. DNA-dependent RNA polymerase catalyzes the transcription of DNA into RNA using the four ribonucleoside triphosphates as substrates. The polypeptide is DNA-directed RNA polymerase subunit alpha (Nostoc sp. (strain PCC 7120 / SAG 25.82 / UTEX 2576)).